We begin with the raw amino-acid sequence, 387 residues long: Patatin-11 (387 aa).

The N-terminal stretch at 1–23 (MATTKSVLVLIFMILATTSSTFA) is a signal peptide. One can recognise a PNPLA domain in the interval 32-230 (LSTDGGGIKG…TVGDPALLSL (199 aa)). The GXGXXG motif lies at 36–41 (GGGIKG). The GXSXG signature appears at 75–79 (GTSTG). The Nucleophile role is filled by S77. Residue N115 is glycosylated (N-linked (GlcNAc...) asparagine). D216 (proton acceptor) is an active-site residue. Residues 216–218 (DGG) carry the DGA/G motif. Residues 322-385 (ENALNGTTTE…DRKKLRANKA (64 aa)) are a coiled coil. N326 carries N-linked (GlcNAc...) asparagine glycosylation.

The protein belongs to the patatin family. As to expression, tuber.

The protein localises to the vacuole. In terms of biological role, probable lipolytic acyl hydrolase (LAH), an activity which is thought to be involved in the response of tubers to pathogens. This is Patatin-11 from Solanum tuberosum (Potato).